The following is a 78-amino-acid chain: uncharacterized protein (78 aa).

The disordered stretch occupies residues 20 to 78 (LQDLFPPHFGNEEADEDDEDGDKYGDDDGEFYGDNDGDNDGDNDGVNDGVGDGPPSTLL). Over residues 31–64 (EEADEDDEDGDKYGDDDGEFYGDNDGDNDGDNDG) the composition is skewed to acidic residues.

This is an uncharacterized protein from Dictyostelium discoideum (Social amoeba).